The following is a 222-amino-acid chain: Glutathione S-transferase A2 (222 aa).

Position 2 is an N-acetylalanine (Ala2). One can recognise a GST N-terminal domain in the interval 3 to 83 (GKPVLHYFNA…YIATKYDLYG (81 aa)). N6-succinyllysine is present on Lys4. Glutathione-binding positions include Tyr9, Lys45, 54 to 55 (QV), and 67 to 68 (QT). The 124-residue stretch at 85–208 (DMKERALIDM…HPGSQRKPPL (124 aa)) folds into the GST C-terminal domain.

It belongs to the GST superfamily. Alpha family. In terms of assembly, homodimer. Heterodimer of GSTA1 and GSTA2. Expressed in the kidney.

It carries out the reaction RX + glutathione = an S-substituted glutathione + a halide anion + H(+). Its function is as follows. Catalyzes the conjugation of glutathione to a large variety of electrophilic compounds. The polypeptide is Glutathione S-transferase A2 (Gsta2) (Mus musculus (Mouse)).